Consider the following 73-residue polypeptide: Putative antitoxin M1627_0365 (73 aa).

Belongs to the UPF0330 family.

Possibly the antitoxin component of a type II toxin-antitoxin (TA) system. The sequence is that of Putative antitoxin M1627_0365 from Saccharolobus islandicus (strain M.16.27) (Sulfolobus islandicus).